Here is a 608-residue protein sequence, read N- to C-terminus: 1-deoxy-D-xylulose-5-phosphate synthase (608 aa).

Thiamine diphosphate contacts are provided by residues His-66 and 107–109 (GHA). Position 138 (Asp-138) interacts with Mg(2+). Residues 139–140 (GA), Asn-167, Phe-277, and Glu-350 each bind thiamine diphosphate. Residue Asn-167 coordinates Mg(2+).

The protein belongs to the transketolase family. DXPS subfamily. Homodimer. Mg(2+) is required as a cofactor. It depends on thiamine diphosphate as a cofactor.

The enzyme catalyses D-glyceraldehyde 3-phosphate + pyruvate + H(+) = 1-deoxy-D-xylulose 5-phosphate + CO2. Its pathway is metabolic intermediate biosynthesis; 1-deoxy-D-xylulose 5-phosphate biosynthesis; 1-deoxy-D-xylulose 5-phosphate from D-glyceraldehyde 3-phosphate and pyruvate: step 1/1. In terms of biological role, catalyzes the acyloin condensation reaction between C atoms 2 and 3 of pyruvate and glyceraldehyde 3-phosphate to yield 1-deoxy-D-xylulose-5-phosphate (DXP). The protein is 1-deoxy-D-xylulose-5-phosphate synthase of Thermotoga petrophila (strain ATCC BAA-488 / DSM 13995 / JCM 10881 / RKU-1).